The following is a 2095-amino-acid chain: Oxygen-regulated protein 1 (2095 aa).

Doublecortin domains follow at residues 35–117 and 157–236; these read KRIS…VDLD and RRLV…GNYD. Disordered stretches follow at residues 358–379, 643–688, 863–887, 1400–1430, and 1572–1595; these read GLSNNDEKNKKSSYPGKTDYGP, ENRK…GKIP, GAEVSEQHVTTRADPLASLKKPDFP, NKKKSISSDKEESRTSEEPRSITNSMTSSER, and SGYPCKASSNSHNDDSGQEKEPTR. Over residues 1405 to 1419 the composition is skewed to basic and acidic residues; it reads ISSDKEESRTSEEPR. The segment covering 1420–1430 has biased composition (polar residues); the sequence is SITNSMTSSER. Basic and acidic residues predominate over residues 1583–1595; it reads HNDDSGQEKEPTR.

In terms of assembly, interacts (via the doublecortin domains) with microtubules. Interacts with RP1L1. Interacts with MAK. In terms of tissue distribution, expressed in the cell bodies and inner segments of photoreceptors. Not found in liver, spleen, kidney, brain, thymus, muscle, heart, lung and testis.

The protein localises to the cytoplasm. The protein resides in the cytoskeleton. It localises to the cilium axoneme. It is found in the cell projection. Its subcellular location is the cilium. The protein localises to the photoreceptor outer segment. Functionally, microtubule-associated protein regulating the stability and length of the microtubule-based axoneme of photoreceptors. Required for the differentiation of photoreceptor cells, it plays a role in the organization of the outer segment of rod and cone photoreceptors ensuring the correct orientation and higher-order stacking of outer segment disks along the photoreceptor axoneme. This chain is Oxygen-regulated protein 1 (Rp1), found in Mus musculus (Mouse).